Here is a 347-residue protein sequence, read N- to C-terminus: UDP-3-O-acylglucosamine N-acyltransferase (347 aa).

Histidine 242 functions as the Proton acceptor in the catalytic mechanism.

Belongs to the transferase hexapeptide repeat family. LpxD subfamily. In terms of assembly, homotrimer.

The catalysed reaction is a UDP-3-O-[(3R)-3-hydroxyacyl]-alpha-D-glucosamine + a (3R)-hydroxyacyl-[ACP] = a UDP-2-N,3-O-bis[(3R)-3-hydroxyacyl]-alpha-D-glucosamine + holo-[ACP] + H(+). Its pathway is bacterial outer membrane biogenesis; LPS lipid A biosynthesis. In terms of biological role, catalyzes the N-acylation of UDP-3-O-acylglucosamine using 3-hydroxyacyl-ACP as the acyl donor. Is involved in the biosynthesis of lipid A, a phosphorylated glycolipid that anchors the lipopolysaccharide to the outer membrane of the cell. The polypeptide is UDP-3-O-acylglucosamine N-acyltransferase (Dechloromonas aromatica (strain RCB)).